The chain runs to 323 residues: Serine/threonine-protein phosphatase PP1-gamma catalytic subunit (323 aa).

A2 carries the N-acetylalanine modification. Positions 64, 66, 92, and 124 each coordinate Mn(2+). The active-site Proton donor is the H125. Residues H173 and H248 each contribute to the Mn(2+) site. Phosphothreonine occurs at positions 307 and 311.

The protein belongs to the PPP phosphatase family. PP-1 subfamily. In terms of assembly, PP1 comprises a catalytic subunit, PPP1CA, PPP1CB or PPP1CC, which is folded into its native form by inhibitor 2 and glycogen synthetase kinase 3, and then complexed to one or several targeting or regulatory subunits. PPP1R12A, PPP1R12B and PPP1R12C mediate binding to myosin. PPP1R3A (in skeletal muscle), PPP1R3B (in liver), PPP1R3C, PPP1R3D and PPP1R3F (in brain) mediate binding to glycogen. PPP1R15A and PPP1R15B mediate binding to EIF2S1. Part of a complex containing PPP1R15B, PP1 and NCK1/2. Interacts with PPP1R3B, PPP1R7 and CDCA2. Interacts with IKFZ1; the interaction targets PPP1CC to pericentromeric heterochromatin, dephosphorylates IKAROS, stabilizes it and prevents it from degradation. Interacts with NOM1 and PPP1R8. Component of the PTW/PP1 phosphatase complex, composed of PPP1R10/PNUTS, TOX4, WDR82, and PPP1CA or PPP1CB or PPP1CC. Interacts with PPP1R8. Interacts with NEK2. Interacts with PPP1R42; the interaction is direct. Interacts with URI1; the interaction is phosphorylation-dependent and occurs in a growth factor-dependent manner. Interacts with FOXP3. Interacts with TMEM225 (via RVxF motif). Interacts with MKI67. Interacts with RRP1B; this targets PPP1CC to the nucleolus. Interacts with DYNLT4. Interacts (via RVxF motif) with FIRRM; regulates PLK1 kinase activity. Interacts with the KNL1 complex subunit KNL1; the interaction is direct and mutually exclusive with KNL1 binding to microtubules. Component of the SHOC2-MRAS-PP1c (SMP) complex consisting of SHOC2, GTP-bound M-Ras/MRAS and the catalytic subunit of protein phosphatase 1 (either PPP1CA, PPP1CB or PPP1CC). SHOC2 and PP1c preferably bind M-Ras/MRAS, but they also bind K-Ras/KRAS, N-Ras/NRAS and H-Ras/HRAS; these interactions are GTP-dependent and both SHOC2 and PP1c are required to form a stable complex. Interacts with SHOC2 in the absence of Ras GTPases. The cofactor is Mn(2+). Phosphorylated by NEK2.

The protein localises to the cytoplasm. The protein resides in the nucleus. It is found in the cleavage furrow. It localises to the nucleolus. Its subcellular location is the nucleoplasm. The protein localises to the chromosome. The protein resides in the centromere. It is found in the kinetochore. It localises to the nucleus speckle. Its subcellular location is the midbody. The protein localises to the mitochondrion. The protein resides in the cytoskeleton. It is found in the microtubule organizing center. It carries out the reaction O-phospho-L-seryl-[protein] + H2O = L-seryl-[protein] + phosphate. The catalysed reaction is O-phospho-L-threonyl-[protein] + H2O = L-threonyl-[protein] + phosphate. Inactivated by binding to URI1. Functionally, protein phosphatase that associates with over 200 regulatory proteins to form highly specific holoenzymes which dephosphorylate hundreds of biological targets. Protein phosphatase 1 (PP1) is essential for cell division, and participates in the regulation of glycogen metabolism, muscle contractility and protein synthesis. Dephosphorylates RPS6KB1. Involved in regulation of ionic conductances and long-term synaptic plasticity. May play an important role in dephosphorylating substrates such as the postsynaptic density-associated Ca(2+)/calmodulin dependent protein kinase II. Component of the PTW/PP1 phosphatase complex, which plays a role in the control of chromatin structure and cell cycle progression during the transition from mitosis into interphase. Regulates the recruitment of the SKA complex to kinetochores. Core component of the SHOC2-MRAS-PP1c (SMP) holophosphatase complex that regulates the MAPK pathway activation. Dephosphorylates MKI67 at the onset of anaphase. The SMP complex specifically dephosphorylates the inhibitory phosphorylation at 'Ser-259' of RAF1 kinase, 'Ser-365' of BRAF kinase and 'Ser-214' of ARAF kinase, stimulating their kinase activities. The SMP complex enhances the dephosphorylation activity and substrate specificity of PP1c. The protein is Serine/threonine-protein phosphatase PP1-gamma catalytic subunit (PPP1CC) of Canis lupus familiaris (Dog).